Consider the following 153-residue polypeptide: Putative ubiquitin-conjugating enzyme E2 N-like (153 aa).

The 148-residue stretch at 3-150 (ELPHRIIKET…ARAWTRLYAM (148 aa)) folds into the UBC core domain. Lysine 83 carries the N6-acetyllysine modification.

Belongs to the ubiquitin-conjugating enzyme family. In terms of tissue distribution, expressed in epididymis (at protein level).

This Homo sapiens (Human) protein is Putative ubiquitin-conjugating enzyme E2 N-like (UBE2NL).